A 424-amino-acid chain; its full sequence is Serine--tRNA ligase (424 aa).

Residue 230–232 (TAE) coordinates L-serine. An ATP-binding site is contributed by 261-263 (RSE). Glu-284 is an L-serine binding site. 348–351 (EISS) serves as a coordination point for ATP. Ser-384 provides a ligand contact to L-serine.

The protein belongs to the class-II aminoacyl-tRNA synthetase family. Type-1 seryl-tRNA synthetase subfamily. In terms of assembly, homodimer. The tRNA molecule binds across the dimer.

It localises to the cytoplasm. The catalysed reaction is tRNA(Ser) + L-serine + ATP = L-seryl-tRNA(Ser) + AMP + diphosphate + H(+). It carries out the reaction tRNA(Sec) + L-serine + ATP = L-seryl-tRNA(Sec) + AMP + diphosphate + H(+). It functions in the pathway aminoacyl-tRNA biosynthesis; selenocysteinyl-tRNA(Sec) biosynthesis; L-seryl-tRNA(Sec) from L-serine and tRNA(Sec): step 1/1. Functionally, catalyzes the attachment of serine to tRNA(Ser). Is also able to aminoacylate tRNA(Sec) with serine, to form the misacylated tRNA L-seryl-tRNA(Sec), which will be further converted into selenocysteinyl-tRNA(Sec). The protein is Serine--tRNA ligase of Streptococcus pneumoniae serotype 2 (strain D39 / NCTC 7466).